The chain runs to 413 residues: MAKEPMLQFVKMARETPEKRPRSLRSQDFHEICGRICPQDRLCEGNCVIEQSGHGTVTIGAVEKYITDTAWENGWVVPGKPAYERSESVGIIGAGPGGLAAADALRRAGLQVTVYDRYDRAGGLLTYGIPGFKLEKDVVARRVEQLEQAGVQFVLNCNVGEDLSFDAIRGQHDAVLIATGVYKQRDLAAPGVGSAGVVQALSYLTASNRRSFGDEVDDDGLDASGKRVVVIGGGDTAMDCVRTAIRQGATSVKCLYRRDRANMPGSQREVANAEEEGVEFVWLSAPRGFIAGDAVEGVIVQKMRLGEPDATGRQMPEIIEGADYVEPADLAIMALGFEPEDLPTLWGVPDLTVTRWGTIKADFRTHATSLPGVYAVGDIVRGASLVVWAIRDGRDAAQSILDYLAQPAVVAAE.

4 residues coordinate [4Fe-4S] cluster: cysteine 33, cysteine 37, cysteine 43, and cysteine 47.

As to quaternary structure, aggregate of 4 catalytic active heterodimers, consisting of a large and a small subunit. It depends on [4Fe-4S] cluster as a cofactor.

It catalyses the reaction 2 L-glutamate + NADP(+) = L-glutamine + 2-oxoglutarate + NADPH + H(+). Its pathway is amino-acid biosynthesis; L-glutamate biosynthesis via GLT pathway; L-glutamate from 2-oxoglutarate and L-glutamine (NADP(+) route): step 1/1. The protein operates within energy metabolism; nitrogen metabolism. This Cereibacter sphaeroides (Rhodobacter sphaeroides) protein is Putative glutamate synthase [NADPH] small chain (gltD).